Here is a 391-residue protein sequence, read N- to C-terminus: Chorismate synthase (391 aa).

Position 48 (Arg-48) interacts with NADP(+). FMN is bound by residues 126 to 128 (RAS), Gly-286, 301 to 305 (KPTSS), and Arg-328.

This sequence belongs to the chorismate synthase family. It depends on FMNH2 as a cofactor.

The catalysed reaction is 5-O-(1-carboxyvinyl)-3-phosphoshikimate = chorismate + phosphate. The protein operates within metabolic intermediate biosynthesis; chorismate biosynthesis; chorismate from D-erythrose 4-phosphate and phosphoenolpyruvate: step 7/7. Its function is as follows. Catalyzes the anti-1,4-elimination of the C-3 phosphate and the C-6 proR hydrogen from 5-enolpyruvylshikimate-3-phosphate (EPSP) to yield chorismate, which is the branch point compound that serves as the starting substrate for the three terminal pathways of aromatic amino acid biosynthesis. This reaction introduces a second double bond into the aromatic ring system. This is Chorismate synthase from Saccharolobus islandicus (strain Y.N.15.51 / Yellowstone #2) (Sulfolobus islandicus).